The primary structure comprises 192 residues: Ion-translocating oxidoreductase complex subunit A (192 aa).

Helical transmembrane passes span 5–25 (VLLL…FLGL), 39–59 (IGMG…AYLV), 67–87 (LGIE…VVQF), 102–122 (LLGI…VALL), 134–154 (IIYG…FASM), and 171–191 (SIAM…TGLV).

The protein belongs to the NqrDE/RnfAE family. As to quaternary structure, the complex is composed of six subunits: RnfA, RnfB, RnfC, RnfD, RnfE and RnfG.

The protein localises to the cell inner membrane. Functionally, part of a membrane-bound complex that couples electron transfer with translocation of ions across the membrane. The protein is Ion-translocating oxidoreductase complex subunit A of Vibrio parahaemolyticus serotype O3:K6 (strain RIMD 2210633).